The sequence spans 138 residues: Putative pre-16S rRNA nuclease (138 aa).

It belongs to the YqgF nuclease family.

The protein resides in the cytoplasm. Functionally, could be a nuclease involved in processing of the 5'-end of pre-16S rRNA. This is Putative pre-16S rRNA nuclease from Salmonella dublin (strain CT_02021853).